The sequence spans 268 residues: Glycine/sarcosine N-methyltransferase (268 aa).

Residues Tyr-26, Trp-34, Arg-43, Ala-67, Asp-88, 114–115 (DW), and Leu-132 contribute to the S-adenosyl-L-methionine site. Substrate is bound by residues Asn-134, Arg-167, and Tyr-206.

It belongs to the class I-like SAM-binding methyltransferase superfamily. Glycine N-methyltransferase family. Monomer.

It carries out the reaction glycine + 2 S-adenosyl-L-methionine = N,N-dimethylglycine + 2 S-adenosyl-L-homocysteine + 2 H(+). The catalysed reaction is glycine + S-adenosyl-L-methionine = sarcosine + S-adenosyl-L-homocysteine + H(+). The enzyme catalyses sarcosine + S-adenosyl-L-methionine = N,N-dimethylglycine + S-adenosyl-L-homocysteine + H(+). The protein operates within amine and polyamine biosynthesis; betaine biosynthesis via glycine pathway; betaine from glycine: step 1/3. It participates in amine and polyamine biosynthesis; betaine biosynthesis via glycine pathway; betaine from glycine: step 2/3. With respect to regulation, p-chloromercuribenzoic acid inhibits more than 95% of the GSMT activities on glycine and sarcosine, and S-adenosylhomocysteine (AdoHcy) inhibits completely GSMT activities. Its function is as follows. Catalyzes the methylation of glycine and sarcosine to sarcosine and dimethylglycine, respectively, with S-adenosylmethionine (AdoMet) acting as the methyl donor. It has strict specificity for glycine and sarcosine as the methyl group acceptors. This Halorhodospira halochloris (Ectothiorhodospira halochloris) protein is Glycine/sarcosine N-methyltransferase.